The primary structure comprises 337 residues: Glycerol-3-phosphate dehydrogenase [NAD(P)+] (337 aa).

Residues S17, Y18, H38, and K112 each contribute to the NADPH site. Residues K112, G141, and T143 each contribute to the sn-glycerol 3-phosphate site. An NADPH-binding site is contributed by A145. Sn-glycerol 3-phosphate is bound by residues K197, D250, S260, R261, and N262. K197 (proton acceptor) is an active-site residue. Residue R261 participates in NADPH binding. NADPH is bound by residues V285 and E287.

This sequence belongs to the NAD-dependent glycerol-3-phosphate dehydrogenase family.

It is found in the cytoplasm. It carries out the reaction sn-glycerol 3-phosphate + NAD(+) = dihydroxyacetone phosphate + NADH + H(+). It catalyses the reaction sn-glycerol 3-phosphate + NADP(+) = dihydroxyacetone phosphate + NADPH + H(+). It functions in the pathway membrane lipid metabolism; glycerophospholipid metabolism. Functionally, catalyzes the reduction of the glycolytic intermediate dihydroxyacetone phosphate (DHAP) to sn-glycerol 3-phosphate (G3P), the key precursor for phospholipid synthesis. This chain is Glycerol-3-phosphate dehydrogenase [NAD(P)+], found in Pasteurella multocida (strain Pm70).